The following is a 446-amino-acid chain: Putative ZDHHC-type palmitoyltransferase 2 (446 aa).

Disordered stretches follow at residues 1-33 (MNLY…INNN) and 56-83 (QIIN…HNNP). 4 N-linked (GlcNAc...) asparagine glycosylation sites follow: Asn-5, Asn-8, Asn-14, and Asn-21. Low complexity predominate over residues 56-81 (QIINKNNNNNHNRNNNNNNNNNNNHN). 4 N-linked (GlcNAc...) asparagine glycosylation sites follow: Asn-141, Asn-145, Asn-159, and Asn-165. 5 helical membrane-spanning segments follow: residues 178 to 198 (IVIF…IFPW), 210 to 230 (IHSF…YLCS), 305 to 325 (YFVL…TLLI), 349 to 369 (LFLL…IMAL), and 410 to 430 (IISN…LPTI). Residues 261–311 (KWCNKCNHQKPERAHHCRYCNRCVLRMDHHCQWLQNCIGLFNQKYFVLFLF) enclose the DHHC domain.

The protein belongs to the DHHC palmitoyltransferase family.

The protein resides in the membrane. It carries out the reaction L-cysteinyl-[protein] + hexadecanoyl-CoA = S-hexadecanoyl-L-cysteinyl-[protein] + CoA. The sequence is that of Putative ZDHHC-type palmitoyltransferase 2 from Dictyostelium discoideum (Social amoeba).